We begin with the raw amino-acid sequence, 229 residues long: Potassium/proton antiporter CemA (229 aa).

Transmembrane regions (helical) follow at residues 7–27 (FTPL…SFSV) and 107–127 (ILHF…SILG).

The protein belongs to the CemA family.

It localises to the plastid. Its subcellular location is the chloroplast inner membrane. It carries out the reaction K(+)(in) + H(+)(out) = K(+)(out) + H(+)(in). Contributes to K(+)/H(+) antiport activity by supporting proton efflux to control proton extrusion and homeostasis in chloroplasts in a light-dependent manner to modulate photosynthesis. Prevents excessive induction of non-photochemical quenching (NPQ) under continuous-light conditions. Indirectly promotes efficient inorganic carbon uptake into chloroplasts. This is Potassium/proton antiporter CemA from Solanum tuberosum (Potato).